Here is a 157-residue protein sequence, read N- to C-terminus: Crossover junction endodeoxyribonuclease RuvC (157 aa).

Active-site residues include D7, E66, and D139. Mg(2+) is bound by residues D7, E66, and D139.

Belongs to the RuvC family. In terms of assembly, homodimer which binds Holliday junction (HJ) DNA. The HJ becomes 2-fold symmetrical on binding to RuvC with unstacked arms; it has a different conformation from HJ DNA in complex with RuvA. In the full resolvosome a probable DNA-RuvA(4)-RuvB(12)-RuvC(2) complex forms which resolves the HJ. Mg(2+) is required as a cofactor.

It is found in the cytoplasm. The enzyme catalyses Endonucleolytic cleavage at a junction such as a reciprocal single-stranded crossover between two homologous DNA duplexes (Holliday junction).. In terms of biological role, the RuvA-RuvB-RuvC complex processes Holliday junction (HJ) DNA during genetic recombination and DNA repair. Endonuclease that resolves HJ intermediates. Cleaves cruciform DNA by making single-stranded nicks across the HJ at symmetrical positions within the homologous arms, yielding a 5'-phosphate and a 3'-hydroxyl group; requires a central core of homology in the junction. The consensus cleavage sequence is 5'-(A/T)TT(C/G)-3'. Cleavage occurs on the 3'-side of the TT dinucleotide at the point of strand exchange. HJ branch migration catalyzed by RuvA-RuvB allows RuvC to scan DNA until it finds its consensus sequence, where it cleaves and resolves the cruciform DNA. The sequence is that of Crossover junction endodeoxyribonuclease RuvC from Helicobacter pylori (strain J99 / ATCC 700824) (Campylobacter pylori J99).